Consider the following 221-residue polypeptide: MAAAVRMNIQMLLEAADYLERREREAEHGYASMLPYNNKDRDALKRRNKSKKNNSSSRSTHNEMEKNRRAHLRLCLEKLKGLVPLGPESSRHTTLSLLTKAKLHIKKLEDCDRKAVHQIDQLQREQRHLKRQLEKLGIERIRMDSIGSTVSSERSDSDREEIDVDVESTDYLTGDLDWSSSSVSDSDERGSMQSLGSDEGYSSTSIKRIKLQDSHKACLGL.

The Nuclear localization signal signature appears at 21-49 (RREREAEHGYASMLPYNNKDRDALKRRNK). 2 disordered regions span residues 30-68 (YASM…EKNR) and 173-204 (TGDL…YSST). Residues 56 to 108 (SSRSTHNEMEKNRRAHLRLCLEKLKGLVPLGPESSRHTTLSLLTKAKLHIKKL) form the bHLH domain. The segment covering 175-184 (DLDWSSSSVS) has biased composition (low complexity). Over residues 191-204 (SMQSLGSDEGYSST) the composition is skewed to polar residues.

Heterodimer with MAX; the interaction is required for DNA-binding. DNA binding requires dimerization with another bHLH protein; does not form homodimers, and does not bind to DNA in the absence of MAX in vitro. Interacts with RNF17. Post-translationally, ubiquitinated by BIRC2/c-IAP1, leading to its subsequent degradation by the proteasome.

Its subcellular location is the nucleus. Its function is as follows. Component of a transcriptional repressor complex together with MAX. In complex with MAX binds to the core DNA sequence 5'-CAC[GA]TG-3'. Antagonizes MYC transcriptional activity by competing with MYC for MAX binding. Binds to the TERT promoter and represses telomerase expression, possibly by interfering with MYC binding. The sequence is that of Max dimerization protein 1 (MXD1) from Homo sapiens (Human).